We begin with the raw amino-acid sequence, 375 residues long: Protein SSUH2 homolog (375 aa).

As to expression, expressed in enterocytes of small and large intestinal mucosa (at protein level). Expressed in chromaffine and interstitial cells. Expressed in peripheral blood and gingival cells.

Its subcellular location is the cytoplasm. The protein localises to the nucleus. Its function is as follows. Plays a role in odontogenesis. This Homo sapiens (Human) protein is Protein SSUH2 homolog.